Here is a 176-residue protein sequence, read N- to C-terminus: 4-hydroxylaminobenzoate lyase (176 aa).

Belongs to the PnbB family.

It catalyses the reaction 4-hydroxylaminobenzoate + H2O + H(+) = 3,4-dihydroxybenzoate + NH4(+). Functionally, lyase involved in the degradation of nitroaromatic compounds. Catalyzes the conversion of 4-hydroxylaminobenzoate to 3,4-dihydroxybenzoate (protocatechuate). Required for the catabolism of 4-nitrotoluene. This chain is 4-hydroxylaminobenzoate lyase, found in Pseudomonas putida (Arthrobacter siderocapsulatus).